A 287-amino-acid polypeptide reads, in one-letter code: Immunoglobulin alpha Fc receptor (287 aa).

Residues 1–21 (MDPKQTTLLCLVLCLGQRIQA) form the signal peptide. Over 22 to 227 (QEGDFPMPFI…SIHQDYTTQN (206 aa)) the chain is Extracellular. Ig-like C2-type domains lie at 42-107 (DGSV…IGHY) and 139-200 (GENI…YNRS). A disulfide bridge links Cys49 with Cys100. Residues Asn65, Asn79, Asn141, Asn177, and Asn186 are each glycosylated (N-linked (GlcNAc...) asparagine). Cys146 and Cys193 are disulfide-bonded. A helical membrane pass occupies residues 228–246 (LIRMAVAGLVLVALLAILV). At 247–287 (ENWHSHTALNKEASADVAEPSWSQQMCQPGLTFARTPSVCK) the chain is on the cytoplasmic side.

Associates with the Fc epsilon RI gamma 2 receptor inducing tyrosine phosphorylation of gamma 2. As to quaternary structure, (Microbial infection) Interacts with Staphylococcus aureus protein SSL11. As to expression, isoform A.1, isoform A.2 and isoform A.3 are differentially expressed between blood and mucosal myeloid cells. Isoform A.1, isoform A.2 and isoform A.3 are expressed in monocytes. Isoform A.1 and isoform A.2 are expressed in alveolar macrophages; however only one isoform is expressed at alveolar macrophages surfaces.

It is found in the cell membrane. The protein resides in the secreted. Binds to the Fc region of immunoglobulins alpha. Mediates several functions including cytokine production. In Homo sapiens (Human), this protein is Immunoglobulin alpha Fc receptor (FCAR).